Reading from the N-terminus, the 273-residue chain is Large ribosomal subunit protein uL2c (273 aa).

Disordered regions lie at residues 30-55 (EKKLTRGWSRAQGRNNKGRITTRHRG) and 222-243 (GSAMNPVDHPHGGGEGKAPIGR). The segment covering 45–55 (NKGRITTRHRG) has biased composition (basic residues).

The protein belongs to the universal ribosomal protein uL2 family. As to quaternary structure, part of the 50S ribosomal subunit.

The protein localises to the plastid. The polypeptide is Large ribosomal subunit protein uL2c (rpl2) (Prototheca wickerhamii).